A 68-amino-acid polypeptide reads, in one-letter code: Large ribosomal subunit protein bL31 (68 aa).

This sequence belongs to the bacterial ribosomal protein bL31 family. Type A subfamily. As to quaternary structure, part of the 50S ribosomal subunit.

Binds the 23S rRNA. The chain is Large ribosomal subunit protein bL31 from Helicobacter hepaticus (strain ATCC 51449 / 3B1).